Here is a 507-residue protein sequence, read N- to C-terminus: ATP synthase subunit alpha, chloroplastic (507 aa).

170-177 (GDRQTGKT) is an ATP binding site.

Belongs to the ATPase alpha/beta chains family. F-type ATPases have 2 components, CF(1) - the catalytic core - and CF(0) - the membrane proton channel. CF(1) has five subunits: alpha(3), beta(3), gamma(1), delta(1), epsilon(1). CF(0) has four main subunits: a, b, b' and c.

It localises to the plastid. The protein localises to the chloroplast thylakoid membrane. It catalyses the reaction ATP + H2O + 4 H(+)(in) = ADP + phosphate + 5 H(+)(out). In terms of biological role, produces ATP from ADP in the presence of a proton gradient across the membrane. The alpha chain is a regulatory subunit. This is ATP synthase subunit alpha, chloroplastic from Ipomoea purpurea (Common morning glory).